The primary structure comprises 2554 residues: Highly reducing polyketide synthase PKS6 (2554 aa).

Residues Met1–Gly48 are disordered. Residues Pro8–Gly48 are compositionally biased toward polar residues. One can recognise a Ketosynthase family 3 (KS3) domain in the interval Leu56–Ala481. Active-site for beta-ketoacyl synthase activity residues include Cys230, His367, and His407. Residues Val595–Glu913 are malonyl-CoA:ACP transacylase (MAT) domain. The segment at His981–Glu1119 is N-terminal hotdog fold. The interval His981–Leu1281 is dehydratase (DH) domain. Positions His981–Gly1287 constitute a PKS/mFAS DH domain. His1013 acts as the Proton acceptor; for dehydratase activity in catalysis. The tract at residues Ala1137–Gly1287 is C-terminal hotdog fold. The Proton donor; for dehydratase activity role is filled by Asp1200. The tract at residues Val1451–Leu1556 is methyltransferase (CMet) domain. Positions Gly1840 to Leu2153 are enoyl reductase (ER) domain. The tract at residues Ala2177–Ile2353 is ketoreductase (KR) domain. One can recognise a Carrier domain in the interval Glu2457 to Ser2534. Ser2494 carries the post-translational modification O-(pantetheine 4'-phosphoryl)serine.

It functions in the pathway secondary metabolite biosynthesis. Functionally, highly reducing polyketide synthase; part of the gene cluster that mediates the biosynthesis of the lipopeptide fusaristatin A. Fusaristatin A consists of a polyketide chain linked to three amino acid residues glutamine (Gln), dehydroalanine (dehydro-Ala), and beta-aminoisobutyric acid. The biosynthesis starts with formation of a linear polyketide chain by the highly reducing polyketide synthase PKS6. The gene cluster does not contain an acyl-CoA ligase or an acyl-transferase, and it is therefore predicted that the polyketide is transferred directly to the nonribosomal peptide synthetase NRPS7. Modules 1-3 from NRPS7 incorporate dehydro-Ala, Gln, and beta-aminoisobutyric acid in the compound, which is released by cyclization. The beta-aminoisobutyric acid units are most likely not freely available to the NRPS, but can be synthesized from thymine, which requires a dehydrogenase, a monooxygenase, and an aminotransferase. The fusaristatin A cluster contains a cytochrome P450 monooxygenase (FGSG_08207) and an aminotransferase (FGSG_17085), which theoretically can perform two of the enzymatic steps. The enzymes may however also be involved in biosynthesis of dehydroalanine or modification of the polyketide. The dehydro-Ala residue can be a result of cyclization, where serine is dehydrated. The last gene of the cluster encodes a protein with an A/B barrel domain found in variable enzymes, which hampers functional prediction. In Gibberella zeae (strain ATCC MYA-4620 / CBS 123657 / FGSC 9075 / NRRL 31084 / PH-1) (Wheat head blight fungus), this protein is Highly reducing polyketide synthase PKS6.